A 434-amino-acid polypeptide reads, in one-letter code: Glutamyl-tRNA reductase (434 aa).

Residues 49-52 (TCNR), Ser-109, 114-116 (EPQ), and Gln-120 contribute to the substrate site. The Nucleophile role is filled by Cys-50. 189 to 194 (GAGEMC) lines the NADP(+) pocket.

This sequence belongs to the glutamyl-tRNA reductase family. Homodimer.

It catalyses the reaction (S)-4-amino-5-oxopentanoate + tRNA(Glu) + NADP(+) = L-glutamyl-tRNA(Glu) + NADPH + H(+). The protein operates within porphyrin-containing compound metabolism; protoporphyrin-IX biosynthesis; 5-aminolevulinate from L-glutamyl-tRNA(Glu): step 1/2. Its function is as follows. Catalyzes the NADPH-dependent reduction of glutamyl-tRNA(Glu) to glutamate 1-semialdehyde (GSA). This is Glutamyl-tRNA reductase from Trichlorobacter lovleyi (strain ATCC BAA-1151 / DSM 17278 / SZ) (Geobacter lovleyi).